The following is a 73-amino-acid chain: MPNSLFKKKLSPIKPGDPIDYKDVETLKKFITERGKILPRRLTGLTAKQQRDLTTAVKRARIIALLPFVNPEG.

The protein belongs to the bacterial ribosomal protein bS18 family. In terms of assembly, part of the 30S ribosomal subunit. Forms a tight heterodimer with protein bS6.

Its function is as follows. Binds as a heterodimer with protein bS6 to the central domain of the 16S rRNA, where it helps stabilize the platform of the 30S subunit. The chain is Small ribosomal subunit protein bS18 from Prochlorococcus marinus (strain SARG / CCMP1375 / SS120).